The sequence spans 324 residues: Lipoyl synthase (324 aa).

Cysteine 71, cysteine 76, cysteine 82, cysteine 97, cysteine 101, cysteine 104, and serine 311 together coordinate [4Fe-4S] cluster. The 218-residue stretch at 83–300 folds into the Radical SAM core domain; it reads FGHGTATFLI…GDKAREMGFT (218 aa).

It belongs to the radical SAM superfamily. Lipoyl synthase family. [4Fe-4S] cluster is required as a cofactor.

It is found in the cytoplasm. It carries out the reaction [[Fe-S] cluster scaffold protein carrying a second [4Fe-4S](2+) cluster] + N(6)-octanoyl-L-lysyl-[protein] + 2 oxidized [2Fe-2S]-[ferredoxin] + 2 S-adenosyl-L-methionine + 4 H(+) = [[Fe-S] cluster scaffold protein] + N(6)-[(R)-dihydrolipoyl]-L-lysyl-[protein] + 4 Fe(3+) + 2 hydrogen sulfide + 2 5'-deoxyadenosine + 2 L-methionine + 2 reduced [2Fe-2S]-[ferredoxin]. Its pathway is protein modification; protein lipoylation via endogenous pathway; protein N(6)-(lipoyl)lysine from octanoyl-[acyl-carrier-protein]: step 2/2. Catalyzes the radical-mediated insertion of two sulfur atoms into the C-6 and C-8 positions of the octanoyl moiety bound to the lipoyl domains of lipoate-dependent enzymes, thereby converting the octanoylated domains into lipoylated derivatives. The protein is Lipoyl synthase of Nitrosococcus oceani (strain ATCC 19707 / BCRC 17464 / JCM 30415 / NCIMB 11848 / C-107).